A 264-amino-acid polypeptide reads, in one-letter code: Thymidylate synthase (264 aa).

DUMP is bound at residue R21. H51 provides a ligand contact to (6R)-5,10-methylene-5,6,7,8-tetrahydrofolate. Position 126 to 127 (R126 to R127) interacts with dUMP. Catalysis depends on C146, which acts as the Nucleophile. Residues R166–D169, N177, and H207–Y209 contribute to the dUMP site. (6R)-5,10-methylene-5,6,7,8-tetrahydrofolate is bound at residue D169. A (6R)-5,10-methylene-5,6,7,8-tetrahydrofolate-binding site is contributed by A263.

It belongs to the thymidylate synthase family. Bacterial-type ThyA subfamily. Homodimer.

The protein localises to the cytoplasm. The enzyme catalyses dUMP + (6R)-5,10-methylene-5,6,7,8-tetrahydrofolate = 7,8-dihydrofolate + dTMP. It functions in the pathway pyrimidine metabolism; dTTP biosynthesis. Its function is as follows. Catalyzes the reductive methylation of 2'-deoxyuridine-5'-monophosphate (dUMP) to 2'-deoxythymidine-5'-monophosphate (dTMP) while utilizing 5,10-methylenetetrahydrofolate (mTHF) as the methyl donor and reductant in the reaction, yielding dihydrofolate (DHF) as a by-product. This enzymatic reaction provides an intracellular de novo source of dTMP, an essential precursor for DNA biosynthesis. This Bartonella quintana (strain Toulouse) (Rochalimaea quintana) protein is Thymidylate synthase.